A 211-amino-acid polypeptide reads, in one-letter code: 2,3-bisphosphoglycerate-dependent phosphoglycerate mutase (211 aa).

Residues 9 to 16 (RHGQSDWN), 22 to 23 (TG), Arg61, 88 to 91 (ERDY), Lys99, 115 to 116 (RR), and 159 to 160 (GN) contribute to the substrate site. Catalysis depends on His10, which acts as the Tele-phosphohistidine intermediate. Glu88 (proton donor/acceptor) is an active-site residue.

Belongs to the phosphoglycerate mutase family. BPG-dependent PGAM subfamily. Homodimer.

The catalysed reaction is (2R)-2-phosphoglycerate = (2R)-3-phosphoglycerate. It participates in carbohydrate degradation; glycolysis; pyruvate from D-glyceraldehyde 3-phosphate: step 3/5. Functionally, catalyzes the interconversion of 2-phosphoglycerate and 3-phosphoglycerate. The polypeptide is 2,3-bisphosphoglycerate-dependent phosphoglycerate mutase (Rhizobium meliloti (strain 1021) (Ensifer meliloti)).